The chain runs to 101 residues: uncharacterized protein (101 aa).

2 consecutive transmembrane segments (helical) span residues 10–30 and 67–87; these read VLAILVCQFIGPNVFIIIGSI and IILGFIGIYVFLFVLLFILSI.

The protein resides in the membrane. This is an uncharacterized protein from Acanthamoeba polyphaga (Amoeba).